The sequence spans 1445 residues: DNA-directed RNA polymerase subunit beta'' (1445 aa).

4 residues coordinate Zn(2+): Cys220, Cys293, Cys300, and Cys303.

The protein belongs to the RNA polymerase beta' chain family. RpoC2 subfamily. As to quaternary structure, in plastids the minimal PEP RNA polymerase catalytic core is composed of four subunits: alpha, beta, beta', and beta''. When a (nuclear-encoded) sigma factor is associated with the core the holoenzyme is formed, which can initiate transcription. The cofactor is Zn(2+).

It is found in the plastid. Its subcellular location is the chloroplast. It carries out the reaction RNA(n) + a ribonucleoside 5'-triphosphate = RNA(n+1) + diphosphate. In terms of biological role, DNA-dependent RNA polymerase catalyzes the transcription of DNA into RNA using the four ribonucleoside triphosphates as substrates. The protein is DNA-directed RNA polymerase subunit beta'' of Anthoceros angustus (Hornwort).